The primary structure comprises 289 residues: MCMRRFYICSQGDNLAIKRIGIASRCDRPEVLDMVREILARFSSQVQIFVSTATAEVLGIEGTPVERMRDEGVELVISVGGDGTVLRNIAKMKDPLPILGINMGTLGFLVDVEPEDAIETIEEVLYGFSYLERMRVDVFLNGEMLETATNEIAVMSAKPAKIIQFEVHVNDCLLDEMRADGVVFATPTGSTAYAMSAGGPIINPRVNAIVVVPVAPFKLSSRPWVIPADSEITVKLLEHKKDAVIAIDGQKSYRIRPEDIVKLKKSKFPARFVRISDTCFYERVQRKLS.

Catalysis depends on aspartate 82, which acts as the Proton acceptor. NAD(+)-binding positions include 82–83 (DG), arginine 87, 150–151 (NE), lysine 161, arginine 178, aspartate 180, 191–196 (TAYAMS), alanine 215, and glutamine 250.

It belongs to the NAD kinase family. A divalent metal cation serves as cofactor.

The protein localises to the cytoplasm. The enzyme catalyses NAD(+) + ATP = ADP + NADP(+) + H(+). Involved in the regulation of the intracellular balance of NAD and NADP, and is a key enzyme in the biosynthesis of NADP. Catalyzes specifically the phosphorylation on 2'-hydroxyl of the adenosine moiety of NAD to yield NADP. The protein is NAD kinase of Methanosarcina mazei (strain ATCC BAA-159 / DSM 3647 / Goe1 / Go1 / JCM 11833 / OCM 88) (Methanosarcina frisia).